A 137-amino-acid chain; its full sequence is Small ribosomal subunit protein uS12 (137 aa).

The interval 1 to 57 is disordered; it reads MPTINQLVRKPRKSKVKKSKSPALNVGYNSRKKVQTNVSSPQKRGVATRVGTMTPKK. Positions 9–20 are enriched in basic residues; sequence RKPRKSKVKKSK. Asp-102 is modified (3-methylthioaspartic acid).

Belongs to the universal ribosomal protein uS12 family. As to quaternary structure, part of the 30S ribosomal subunit. Contacts proteins S8 and S17. May interact with IF1 in the 30S initiation complex.

Its function is as follows. With S4 and S5 plays an important role in translational accuracy. Functionally, interacts with and stabilizes bases of the 16S rRNA that are involved in tRNA selection in the A site and with the mRNA backbone. Located at the interface of the 30S and 50S subunits, it traverses the body of the 30S subunit contacting proteins on the other side and probably holding the rRNA structure together. The combined cluster of proteins S8, S12 and S17 appears to hold together the shoulder and platform of the 30S subunit. The polypeptide is Small ribosomal subunit protein uS12 (Streptococcus suis (strain 05ZYH33)).